Reading from the N-terminus, the 660-residue chain is Methionine--tRNA ligase (660 aa).

The 'HIGH' region motif lies at Pro11–His21. Residues Cys143, Cys146, Cys155, and Cys158 each contribute to the Zn(2+) site. Positions Lys325 to Ser329 match the 'KMSKS' region motif. Thr328 provides a ligand contact to ATP. Residues Asp563 to Gln660 form the tRNA-binding domain.

Belongs to the class-I aminoacyl-tRNA synthetase family. MetG type 1 subfamily. As to quaternary structure, homodimer. Requires Zn(2+) as cofactor.

It localises to the cytoplasm. It catalyses the reaction tRNA(Met) + L-methionine + ATP = L-methionyl-tRNA(Met) + AMP + diphosphate. Its function is as follows. Is required not only for elongation of protein synthesis but also for the initiation of all mRNA translation through initiator tRNA(fMet) aminoacylation. The protein is Methionine--tRNA ligase of Methanobrevibacter smithii (strain ATCC 35061 / DSM 861 / OCM 144 / PS).